Consider the following 256-residue polypeptide: Imidazole glycerol phosphate synthase subunit HisF (256 aa).

Residues Asp12 and Asp131 contribute to the active site.

It belongs to the HisA/HisF family. Heterodimer of HisH and HisF.

It localises to the cytoplasm. It carries out the reaction 5-[(5-phospho-1-deoxy-D-ribulos-1-ylimino)methylamino]-1-(5-phospho-beta-D-ribosyl)imidazole-4-carboxamide + L-glutamine = D-erythro-1-(imidazol-4-yl)glycerol 3-phosphate + 5-amino-1-(5-phospho-beta-D-ribosyl)imidazole-4-carboxamide + L-glutamate + H(+). It participates in amino-acid biosynthesis; L-histidine biosynthesis; L-histidine from 5-phospho-alpha-D-ribose 1-diphosphate: step 5/9. IGPS catalyzes the conversion of PRFAR and glutamine to IGP, AICAR and glutamate. The HisF subunit catalyzes the cyclization activity that produces IGP and AICAR from PRFAR using the ammonia provided by the HisH subunit. This is Imidazole glycerol phosphate synthase subunit HisF from Bifidobacterium longum (strain DJO10A).